A 381-amino-acid chain; its full sequence is 5-cytosine rRNA methyltransferase NSUN4 (381 aa).

A mitochondrion-targeting transit peptide spans 1 to 25 (MAAPVLRCVRKLLKLVDFTPVPRRY). Positions 182, 183, 184, and 201 each coordinate S-adenosyl-L-methionine. Ser203 is subject to Phosphoserine. S-adenosyl-L-methionine-binding residues include Arg206, Asp234, Gly235, and Asp252. Residue Cys307 is the Nucleophile of the active site.

This sequence belongs to the class I-like SAM-binding methyltransferase superfamily. RsmB/NOP family. Heterodimer with MTERFD2/MTERF4; this interaction seems to be required for NSUN4 recruitment to the mitochondrial large ribosomal subunit.

The protein localises to the mitochondrion. The catalysed reaction is a cytidine in rRNA + S-adenosyl-L-methionine = a 5-methylcytidine in rRNA + S-adenosyl-L-homocysteine + H(+). The enzyme catalyses a cytidine in mRNA + S-adenosyl-L-methionine = a 5-methylcytidine in mRNA + S-adenosyl-L-homocysteine + H(+). In terms of biological role, mitochondrial RNA cytosine C(5)-methyltransferase that methylates cytosine to 5-methylcytosine (m5C) in various RNAs, such as rRNAs, mRNAs and some long non-coding RNAs (lncRNAs). Involved in mitochondrial ribosome small subunit (SSU) maturation by catalyzing methylation of mitochondrial 12S rRNA; the function is independent of MTERFD2/MTERF4 and assembled mitochondrial ribosome large subunit (LSU). Targeted to LSU by MTERFD2/MTERF4 and probably is involved in a final step in ribosome biogenesis to ensure that SSU and LSU are assembled. In vitro can methylate 16S rRNA of the LSU; the methylation is enhanced by MTERFD/MTERF4. Also acts as a regulator of innate immunity by marking double-stranded mitochondrial RNAs(mt-dsRNAs) generated in response to stress: catalyzes m5C modification on mitochondrial RNAs, such as a mRNAs and lncRNAs, with a preference for the termini of light-strand lncRNAs, promoting their degradation and cytosolic release. Modified light-strand lncRNAs are then recognized by C1QBP reader and recruited to the mitochondrial degradosome complex, which promotes their degradation. This Mus musculus (Mouse) protein is 5-cytosine rRNA methyltransferase NSUN4.